Consider the following 421-residue polypeptide: Nuclear envelope integral membrane protein 2 (421 aa).

Residues 1-22 (MPPGSWWLVLWLPPLATLPAGA) form the signal peptide. A run of 5 helical transmembrane segments spans residues 147 to 167 (NVVDFRLFLVFATGIFLFFYA), 175 to 195 (VFYYSSGTVLGILMTLVFVLL), 206 to 226 (TFGALMIGCWFASVYVLCQLM), 232 to 252 (LWCGNRIYVLGYVLVVGLCSF), and 279 to 299 (LVLVYTGMAISQFAYAVMILL).

This sequence belongs to the NEMP family.

It localises to the nucleus inner membrane. The protein is Nuclear envelope integral membrane protein 2 (Nemp2) of Rattus norvegicus (Rat).